A 105-amino-acid chain; its full sequence is Nucleoid-associated protein Dred_0043 (105 aa).

Belongs to the YbaB/EbfC family. Homodimer.

It is found in the cytoplasm. It localises to the nucleoid. Its function is as follows. Binds to DNA and alters its conformation. May be involved in regulation of gene expression, nucleoid organization and DNA protection. This Desulforamulus reducens (strain ATCC BAA-1160 / DSM 100696 / MI-1) (Desulfotomaculum reducens) protein is Nucleoid-associated protein Dred_0043.